The following is a 391-amino-acid chain: Multidrug resistance protein MdtL (391 aa).

Helical transmembrane passes span 4 to 24, 42 to 62, 69 to 89, 93 to 113, 131 to 151, 158 to 178, 203 to 222, 245 to 265, 269 to 289, 293 to 313, 331 to 351, and 356 to 376; these read FLICSFALVLLYPAGIDMYLV, IAFSVYLAGMAAAMLFAGKVA, PVAIPGAALFIIASVFCSLAE, LFLAGRFLQGLGAGCCYVVAF, LLNGITCIIPVLAPVLGHLIM, SLFWTMATMGIAVLMLSLFIL, FFLSRVVITTLSVSVILTFV, ALTAGVSMTVSFSTPFALGIF, TLMITSQVLFLAAGITLAVSP, VSLFGITLICAGFSVGFGVAM, LGIAQVCGSSLWIWLAAVVGI, and MLIGILIACSIVSLLLIMFVA.

It belongs to the major facilitator superfamily. DHA1 family. MdtL (TC 2.A.1.2.22) subfamily.

Its subcellular location is the cell inner membrane. Functionally, confers resistance to chloramphenicol. In Escherichia coli O127:H6 (strain E2348/69 / EPEC), this protein is Multidrug resistance protein MdtL.